We begin with the raw amino-acid sequence, 281 residues long: MMNSIKFIFLGDVYGKAGRNIIKNNLAQLKSKYQADLVIVNAENTTHGKGLSLKHYEFLKEAGVNYITMGNHTWFQKLDLAVVINKKDLVRPLNLDTSFAFHNLGQGSLVFEFNKAKIRITNLLGTSVPLPFKTTNPFKVLKELILKRDCDLHIVDFHAETTSEKNAFCMAFDGYVTTIFGTHTHVPSADLRITPKGSAYITDVGMCGPGFGSVIGANPEQSIRLFCAGSREHFEVSKCGAQLNGVFFEVDVNTKKVIKTEAIRIVEDDPRYLKQDYFNLI.

Fe cation-binding residues include D12, E43, N44, and N71. The Proton donor role is filled by H72. Positions 158, 183, and 185 each coordinate Fe cation.

It belongs to the YmdB-like family. Fe(3+) is required as a cofactor.

This chain is Putative phosphatase/phosphodiesterase MPN_349, found in Mycoplasma pneumoniae (strain ATCC 29342 / M129 / Subtype 1) (Mycoplasmoides pneumoniae).